Reading from the N-terminus, the 90-residue chain is Phenol 2-monooxygenase, stimulatory component DmpM (90 aa).

This sequence belongs to the TmoD/XamoD family. As to quaternary structure, active as a monomer. Formation of dimers inactivates the protein. The multicomponent enzyme phenol hydroxylase is formed by DmpL (P1 component), DmpM (P2 component), DmpN (P3 component), DmpO (P4 component) and DmpP (P5 component).

The catalysed reaction is phenol + NADH + O2 + H(+) = catechol + NAD(+) + H2O. It functions in the pathway aromatic compound metabolism; phenol degradation. Part of a multicomponent enzyme which catalyzes the degradation of phenol and some of its methylated derivatives. DmpM is a regulatory subunit that stimulates the phenol hydroxylase activity of the complex. The steady-state rate of phenol hydroxylase turnover is dependent on the DmpM concentration, with a maximum observed rate at about 1.5 DmpM per oxygenase monomer. Higher concentrations of DmpM inhibit phenol hydroxylase activity. May act by altering the redox potential of the oxygenase. Required for growth on phenol and for in vitro phenol hydroxylase activity. The chain is Phenol 2-monooxygenase, stimulatory component DmpM from Pseudomonas sp. (strain CF600).